A 102-amino-acid polypeptide reads, in one-letter code: Small ribosomal subunit protein uS10 (102 aa).

This sequence belongs to the universal ribosomal protein uS10 family. As to quaternary structure, part of the 30S ribosomal subunit.

Involved in the binding of tRNA to the ribosomes. In Arthrobacter sp. (strain FB24), this protein is Small ribosomal subunit protein uS10.